Here is an 81-residue protein sequence, read N- to C-terminus: Translational regulator CsrA (81 aa).

The protein belongs to the CsrA/RsmA family. In terms of assembly, homodimer; the beta-strands of each monomer intercalate to form a hydrophobic core, while the alpha-helices form wings that extend away from the core.

It localises to the cytoplasm. In terms of biological role, a translational regulator that binds mRNA to regulate translation initiation and/or mRNA stability. Usually binds in the 5'-UTR at or near the Shine-Dalgarno sequence preventing ribosome-binding, thus repressing translation. Its main target seems to be the major flagellin gene, while its function is anatagonized by FliW. This chain is Translational regulator CsrA, found in Borreliella burgdorferi (strain ATCC 35210 / DSM 4680 / CIP 102532 / B31) (Borrelia burgdorferi).